Here is a 650-residue protein sequence, read N- to C-terminus: MICOS complex subunit MIC60, mitochondrial (650 aa).

Residues 1-34 (MLRKSVLELSSRLSIKRFPRNLGAQRFHLSSSRN) constitute a mitochondrion transit peptide. Residues 26–74 (RFHLSSSRNASTSGKNGLPGAKPVGKPDASKVDPPKVTPPPPTKGNSSK) form a disordered region. Residues 28–40 (HLSSSRNASTSGK) are compositionally biased toward polar residues. The Mitochondrial matrix portion of the chain corresponds to 35–74 (ASTSGKNGLPGAKPVGKPDASKVDPPKVTPPPPTKGNSSK). A helical transmembrane segment spans residues 75-95 (VVIGGVAIAGAFLVAYQTGYL). The Mitochondrial intermembrane portion of the chain corresponds to 96 to 549 (DQYLGKEQQK…FDTLKGTLRH (454 aa)). 3 disordered regions span residues 121 to 168 (EAHH…ESDL), 239 to 267 (QSSS…EDGI), and 284 to 304 (EGSD…TKET). Low complexity predominate over residues 284–299 (EGSDTESTGSSSIGEQ). Coiled-coil stretches lie at residues 345–369 (AQVF…LRAR) and 396–430 (KAIQ…LAKA). A helical membrane pass occupies residues 550–570 (FSLIPPGGGGILAHSLAHVAS). Residues 571 to 650 (SLKFKEVDQA…QSYATCVSLT (80 aa)) lie on the Mitochondrial matrix side of the membrane.

The protein belongs to the MICOS complex subunit Mic60 family. As to quaternary structure, component of the mitochondrial contact site and cristae organizing system (MICOS) complex. The MICOS complex associates with mitochondrial outer membrane proteins. Present in a large lipid-enriched complex called mitochondrial transmembrane lipoprotein (MTL) complex made of proteins located in the two mitochondrial membranes, including the TOM complex and the core components of the MICOS complex and containing at least digalactosyldiacylglycerol (DGDG). Binds to TOM40-1. Component of a mitochondrial large protein complex that contains, at least, MIC60, DGS1, TOM40, TOM20 proteins, and petC/RISP.

The protein localises to the mitochondrion inner membrane. Component of the MICOS complex, a large protein complex of the mitochondrial inner membrane that plays crucial roles in the maintenance of crista junctions, inner membrane architecture, and formation of contact sites to the outer membrane. Plays a role in keeping cristae membranes connected to the inner boundary membrane. Also promotes protein import via the mitochondrial intermembrane space assembly (MIA) pathway. Involved in the maintenance of mitochondria morphology. Binds to glycerolipids such as cardiolipin (CL). Contributes to the export of phosphatidylethanolamine (PE) from mitochondria and to the import of galactoglycerolipids from plastids during phosphate (Pi) starvation. Promotes lipid desorption from membranes, likely as an initial step for lipid transfer, and regulates probably the tethering between the inner and outer membranes of mitochondria by binding to TOM40 proteins. This Arabidopsis thaliana (Mouse-ear cress) protein is MICOS complex subunit MIC60, mitochondrial.